The chain runs to 404 residues: Sorting nexin-5 (404 aa).

Residue alanine 2 is modified to N-acetylalanine. Residues 25–172 (LNVDPSLQID…HVFLEYDQDL (148 aa)) enclose the PX domain. A 1,2-diacyl-sn-glycero-3-phospho-(1D-myo-inositol-4,5-bisphosphate) contacts are provided by residues 40 to 46 (SERDKVK), 99 to 105 (FDGPREK), and 113 to 116 (EGSM). The tract at residues 169–261 (DQDLSVRRKN…HSLALEEPTV (93 aa)) is interaction with DOCK1. Residues 183–200 (FGGFFKSVVKSADEVLFS) form a membrane-binding amphipathic helix region. Position 193 is a phosphoserine (serine 193). Residues 202-404 (VKEVDDFFEQ…QSCIDLFKNN (203 aa)) form the BAR domain. Lysine 275 is subject to N6-acetyllysine.

It belongs to the sorting nexin family. As to quaternary structure, forms heterodimers with BAR domain-containing sorting nexins SNX1 and SNX2; does not homodimerize. The heterodimers are proposed to self-assemble into helical arrays on the membrane to stabilize and expand local membrane curvature underlying endosomal tubule formation. Thought to be a component of the originally described retromer complex (also called SNX-BAR retromer) which is a pentamer containing the heterotrimeric retromer cargo-selective complex (CSC), also described as vacuolar protein sorting subcomplex (VPS), and a heterodimeric membrane-deforming subcomplex formed between SNX1 or SNX2 and SNX5 or SNX6 (also called SNX-BAR subcomplex); the respective CSC and SNX-BAR subcomplexes associate with low affinity. Interacts with SNX1, SNX2, VPS26A, VPS29, VPS35, DCTN1, DOCK1, MIB1, PIP5K1C. Interacts with HGS; increased by PIP5K1C kinase activity and by PtdIns(3P) and/or PtdIns(3,4)P2.

It localises to the endosome. Its subcellular location is the early endosome. The protein localises to the early endosome membrane. It is found in the cell membrane. The protein resides in the cytoplasmic vesicle membrane. It localises to the cytoplasm. Its subcellular location is the cell projection. The protein localises to the phagocytic cup. It is found in the ruffle. Functionally, involved in several stages of intracellular trafficking. Interacts with membranes containing phosphatidylinositol lipids. Acts in part as component of the retromer membrane-deforming SNX-BAR subcomplex. The SNX-BAR retromer mediates retrograde transport of cargo proteins from endosomes to the trans-Golgi network (TGN) and is involved in endosome-to-plasma membrane transport for cargo protein recycling. The SNX-BAR subcomplex functions to deform the donor membrane into a tubular profile called endosome-to-TGN transport carrier (ETC). Does not have in vitro vesicle-to-membrane remodeling activity. Involved in retrograde transport of lysosomal enzyme receptor IGF2R. May function as link between endosomal transport vesicles and dynactin. Plays a role in the internalization of EGFR after EGF stimulation. Involved in EGFR endosomal sorting and degradation; the function involves PIP5K1C and is retromer-independent. Together with PIP5K1C facilitates HGS interaction with ubiquitinated EGFR, which initiates EGFR sorting to intraluminal vesicles (ILVs) of the multivesicular body for subsequent lysosomal degradation. Involved in E-cadherin sorting and degradation; inhibits PIP5K1C-mediated E-cadherin degradation. Plays a role in macropinocytosis. The chain is Sorting nexin-5 (Snx5) from Rattus norvegicus (Rat).